Reading from the N-terminus, the 70-residue chain is Putative membrane protein insertion efficiency factor (70 aa).

Belongs to the UPF0161 family.

It localises to the cell inner membrane. In terms of biological role, could be involved in insertion of integral membrane proteins into the membrane. The sequence is that of Putative membrane protein insertion efficiency factor from Geobacter sp. (strain M21).